Consider the following 80-residue polypeptide: MVELKIACKLDGSCEKPRYRKYKCKVCGWVYDPLKGDPSQNIPPKTPFEELPDTWICPVCRGKVGKESFEPLDEWVEFDE.

In terms of domain architecture, Rubredoxin-like spans 19–72 (YRKYKCKVCGWVYDPLKGDPSQNIPPKTPFEELPDTWICPVCRGKVGKESFEPL). Fe cation contacts are provided by C24, C27, C57, and C60.

It belongs to the rubredoxin family. Requires Fe(3+) as cofactor.

Functionally, rubredoxin is a small nonheme, iron protein lacking acid-labile sulfide. Its single Fe, chelated to 4 Cys, functions as an electron acceptor and may also stabilize the conformation of the molecule. The chain is Probable Rubredoxin-1 from Methanocaldococcus jannaschii (strain ATCC 43067 / DSM 2661 / JAL-1 / JCM 10045 / NBRC 100440) (Methanococcus jannaschii).